We begin with the raw amino-acid sequence, 370 residues long: UDP-N-acetylglucosamine--N-acetylmuramyl-(pentapeptide) pyrophosphoryl-undecaprenol N-acetylglucosamine transferase (370 aa).

UDP-N-acetyl-alpha-D-glucosamine is bound by residues 10–12 (TGG), Asn126, Ser200, Ile255, and Gln300.

This sequence belongs to the glycosyltransferase 28 family. MurG subfamily.

It localises to the cell membrane. It catalyses the reaction Mur2Ac(oyl-L-Ala-gamma-D-Glu-L-Lys-D-Ala-D-Ala)-di-trans,octa-cis-undecaprenyl diphosphate + UDP-N-acetyl-alpha-D-glucosamine = beta-D-GlcNAc-(1-&gt;4)-Mur2Ac(oyl-L-Ala-gamma-D-Glu-L-Lys-D-Ala-D-Ala)-di-trans,octa-cis-undecaprenyl diphosphate + UDP + H(+). It functions in the pathway cell wall biogenesis; peptidoglycan biosynthesis. Cell wall formation. Catalyzes the transfer of a GlcNAc subunit on undecaprenyl-pyrophosphoryl-MurNAc-pentapeptide (lipid intermediate I) to form undecaprenyl-pyrophosphoryl-MurNAc-(pentapeptide)GlcNAc (lipid intermediate II). The polypeptide is UDP-N-acetylglucosamine--N-acetylmuramyl-(pentapeptide) pyrophosphoryl-undecaprenol N-acetylglucosamine transferase (Lactobacillus delbrueckii subsp. bulgaricus (strain ATCC 11842 / DSM 20081 / BCRC 10696 / JCM 1002 / NBRC 13953 / NCIMB 11778 / NCTC 12712 / WDCM 00102 / Lb 14)).